The primary structure comprises 469 residues: Neuraminidase (469 aa).

The Intravirion segment spans residues 1–9; that stretch reads MNPNQKIIT. The helical transmembrane segment at 10–30 threads the bilayer; that stretch reads IGSVSLTIATVCFLMQIAILV. Residues 11–33 are involved in apical transport and lipid raft association; sequence GSVSLTIATVCFLMQIAILVTTV. Over 31 to 469 the chain is Virion surface; the sequence is TTVTLHFKQY…DGADINLMPI (439 aa). The interval 36–88 is hypervariable stalk region; sequence HFKQYECDSPANNQVMPCEPIIIERNITEIVYLTNTTIEKEICPKLVEYRNWS. Residues asparagine 61, asparagine 70, and asparagine 86 are each glycosylated (N-linked (GlcNAc...) asparagine; by host). The head of neuraminidase stretch occupies residues 91-469; sequence QCKITGFAPF…DGADINLMPI (379 aa). Intrachain disulfides connect cysteine 92–cysteine 417, cysteine 124–cysteine 129, cysteine 183–cysteine 230, cysteine 232–cysteine 237, cysteine 278–cysteine 291, cysteine 280–cysteine 289, cysteine 318–cysteine 337, and cysteine 421–cysteine 447. Arginine 118 lines the substrate pocket. The N-linked (GlcNAc...) asparagine; by host glycan is linked to asparagine 146. Aspartate 151 serves as the catalytic Proton donor/acceptor. Arginine 152 serves as a coordination point for substrate. 2 N-linked (GlcNAc...) asparagine; by host glycosylation sites follow: asparagine 200 and asparagine 234. 276-277 contacts substrate; it reads EE. Arginine 292 provides a ligand contact to substrate. Aspartate 293, glycine 297, and aspartate 324 together coordinate Ca(2+). The tract at residues 326 to 350 is disordered; it reads PRNNDRSSNSNCRNPNNDKGNHGVK. Low complexity predominate over residues 331-343; the sequence is RSSNSNCRNPNND. Substrate is bound at residue arginine 371. N-linked (GlcNAc...) asparagine; by host glycosylation is present at asparagine 402. The Nucleophile role is filled by tyrosine 406.

Belongs to the glycosyl hydrolase 34 family. In terms of assembly, homotetramer. Requires Ca(2+) as cofactor. Post-translationally, N-glycosylated.

The protein localises to the virion membrane. Its subcellular location is the host apical cell membrane. The catalysed reaction is Hydrolysis of alpha-(2-&gt;3)-, alpha-(2-&gt;6)-, alpha-(2-&gt;8)- glycosidic linkages of terminal sialic acid residues in oligosaccharides, glycoproteins, glycolipids, colominic acid and synthetic substrates.. With respect to regulation, inhibited by the neuraminidase inhibitors zanamivir (Relenza) and oseltamivir (Tamiflu). These drugs interfere with the release of progeny virus from infected cells and are effective against all influenza strains. Resistance to neuraminidase inhibitors is quite rare. Functionally, catalyzes the removal of terminal sialic acid residues from viral and cellular glycoconjugates. Cleaves off the terminal sialic acids on the glycosylated HA during virus budding to facilitate virus release. Additionally helps virus spread through the circulation by further removing sialic acids from the cell surface. These cleavages prevent self-aggregation and ensure the efficient spread of the progeny virus from cell to cell. Otherwise, infection would be limited to one round of replication. Described as a receptor-destroying enzyme because it cleaves a terminal sialic acid from the cellular receptors. May facilitate viral invasion of the upper airways by cleaving the sialic acid moieties on the mucin of the airway epithelial cells. Likely to plays a role in the budding process through its association with lipid rafts during intracellular transport. May additionally display a raft-association independent effect on budding. Plays a role in the determination of host range restriction on replication and virulence. Sialidase activity in late endosome/lysosome traffic seems to enhance virus replication. This is Neuraminidase from Aves (whales).